The primary structure comprises 705 residues: Elongation factor G 2 (705 aa).

The tr-type G domain occupies 8–290 (ELYRNIGISA…AVLDYLPSPL (283 aa)). GTP is bound by residues 17–24 (AHIDAGKT), 88–92 (DTPGH), and 142–145 (NKMD).

The protein belongs to the TRAFAC class translation factor GTPase superfamily. Classic translation factor GTPase family. EF-G/EF-2 subfamily.

It localises to the cytoplasm. Its function is as follows. Catalyzes the GTP-dependent ribosomal translocation step during translation elongation. During this step, the ribosome changes from the pre-translocational (PRE) to the post-translocational (POST) state as the newly formed A-site-bound peptidyl-tRNA and P-site-bound deacylated tRNA move to the P and E sites, respectively. Catalyzes the coordinated movement of the two tRNA molecules, the mRNA and conformational changes in the ribosome. The sequence is that of Elongation factor G 2 from Bordetella avium (strain 197N).